Reading from the N-terminus, the 138-residue chain is Large ribosomal subunit protein uL16 (138 aa).

Basic residues predominate over residues Met-1–Gln-13. The segment at Met-1–Thr-22 is disordered.

The protein belongs to the universal ribosomal protein uL16 family. As to quaternary structure, part of the 50S ribosomal subunit.

Binds 23S rRNA and is also seen to make contacts with the A and possibly P site tRNAs. This is Large ribosomal subunit protein uL16 from Paracidovorax citrulli (strain AAC00-1) (Acidovorax citrulli).